A 191-amino-acid chain; its full sequence is dTTP/UTP pyrophosphatase (191 aa).

Catalysis depends on Asp71, which acts as the Proton acceptor.

The protein belongs to the Maf family. YhdE subfamily. The cofactor is a divalent metal cation.

It localises to the cytoplasm. It catalyses the reaction dTTP + H2O = dTMP + diphosphate + H(+). The catalysed reaction is UTP + H2O = UMP + diphosphate + H(+). In terms of biological role, nucleoside triphosphate pyrophosphatase that hydrolyzes dTTP and UTP. May have a dual role in cell division arrest and in preventing the incorporation of modified nucleotides into cellular nucleic acids. The polypeptide is dTTP/UTP pyrophosphatase (Geobacter sulfurreducens (strain ATCC 51573 / DSM 12127 / PCA)).